The following is a 556-amino-acid chain: Urocanate hydratase (556 aa).

NAD(+) is bound by residues 52-53 (GG), Gln130, 176-178 (GMG), Glu196, Arg201, 242-243 (NA), 263-267 (QTSAH), 273-274 (YL), and Tyr322. Cys410 is an active-site residue. Position 492 (Gly492) interacts with NAD(+).

It belongs to the urocanase family. NAD(+) is required as a cofactor.

It is found in the cytoplasm. It catalyses the reaction 4-imidazolone-5-propanoate = trans-urocanate + H2O. The protein operates within amino-acid degradation; L-histidine degradation into L-glutamate; N-formimidoyl-L-glutamate from L-histidine: step 2/3. Catalyzes the conversion of urocanate to 4-imidazolone-5-propionate. In Shewanella piezotolerans (strain WP3 / JCM 13877), this protein is Urocanate hydratase.